The primary structure comprises 194 residues: 21 kDa hemolysin (194 aa).

The signal sequence occupies residues 1-19; it reads MRTRSRSTVRPLWPPPSPA. BON domains follow at residues 49–118 and 127–194; these read DDEV…RTGE and IDSW…NYVQ.

The protein localises to the periplasm. This Actinobacillus pleuropneumoniae (Haemophilus pleuropneumoniae) protein is 21 kDa hemolysin (hly).